The following is a 203-amino-acid chain: MQFFIIGTDTNVGKTIVSSWLCLHTAYDYFKMIQTGSINGTDSDILKKLTYSKIHKEAYCYKEPLSPHLAAKLEQDEININNIILPNASNLVIEGAGGLLVPINQQYLLLDIISYLMLPVILVTHSRLGTINHTLLTLQALKSKGIEVVGVIVNGKPNQDNCDAITWYGKTTILAQFPFLSTITKTTLRNIPLTQELKQLFIV.

11 to 16 (NVGKTI) contacts ATP. Thr15 provides a ligand contact to Mg(2+). The active site involves Lys31. Residue Thr35 participates in substrate binding. Residues Asp42 and 94–97 (EGAG) each bind ATP. Asp42 and Glu94 together coordinate Mg(2+).

The protein belongs to the dethiobiotin synthetase family. As to quaternary structure, homodimer. It depends on Mg(2+) as a cofactor.

The protein localises to the cytoplasm. The enzyme catalyses (7R,8S)-7,8-diammoniononanoate + CO2 + ATP = (4R,5S)-dethiobiotin + ADP + phosphate + 3 H(+). It functions in the pathway cofactor biosynthesis; biotin biosynthesis; biotin from 7,8-diaminononanoate: step 1/2. Functionally, catalyzes a mechanistically unusual reaction, the ATP-dependent insertion of CO2 between the N7 and N8 nitrogen atoms of 7,8-diaminopelargonic acid (DAPA, also called 7,8-diammoniononanoate) to form a ureido ring. The sequence is that of ATP-dependent dethiobiotin synthetase BioD from Lawsonia intracellularis (strain PHE/MN1-00).